Reading from the N-terminus, the 138-residue chain is Basic phospholipase A2 BP-I (138 aa).

A signal peptide spans 1–16 (MRTLWIMAVLLLGVDG). Cystine bridges form between cysteine 42/cysteine 132, cysteine 44/cysteine 60, cysteine 59/cysteine 112, cysteine 65/cysteine 138, cysteine 66/cysteine 105, cysteine 73/cysteine 98, and cysteine 91/cysteine 103. Residues glycine 45 and glycine 47 each contribute to the Ca(2+) site. Histidine 63 is a catalytic residue. Aspartate 106 is a catalytic residue.

This sequence belongs to the phospholipase A2 family. Group II subfamily. K49 sub-subfamily. It depends on Ca(2+) as a cofactor. As to expression, expressed by the venom gland.

The protein resides in the secreted. It catalyses the reaction a 1,2-diacyl-sn-glycero-3-phosphocholine + H2O = a 1-acyl-sn-glycero-3-phosphocholine + a fatty acid + H(+). Functionally, snake venom phospholipase A2 (PLA2) that has strong myotoxic activity with a low phospholipase A2 activity. PLA2 catalyzes the calcium-dependent hydrolysis of the 2-acyl groups in 3-sn-phosphoglycerides. The polypeptide is Basic phospholipase A2 BP-I (Protobothrops flavoviridis (Habu)).